The chain runs to 276 residues: NADPH-dependent 7-cyano-7-deazaguanine reductase (276 aa).

83 to 85 (IES) contributes to the substrate binding site. 85–86 (SK) lines the NADPH pocket. The Thioimide intermediate role is filled by Cys184. The Proton donor role is filled by Asp191. 223–224 (HE) is a substrate binding site. 252–253 (RG) is a binding site for NADPH.

It belongs to the GTP cyclohydrolase I family. QueF type 2 subfamily. Homodimer.

The protein resides in the cytoplasm. It catalyses the reaction 7-aminomethyl-7-carbaguanine + 2 NADP(+) = 7-cyano-7-deazaguanine + 2 NADPH + 3 H(+). The protein operates within tRNA modification; tRNA-queuosine biosynthesis. Its function is as follows. Catalyzes the NADPH-dependent reduction of 7-cyano-7-deazaguanine (preQ0) to 7-aminomethyl-7-deazaguanine (preQ1). The polypeptide is NADPH-dependent 7-cyano-7-deazaguanine reductase (Pseudomonas putida (strain ATCC 700007 / DSM 6899 / JCM 31910 / BCRC 17059 / LMG 24140 / F1)).